Consider the following 124-residue polypeptide: Small ribosomal subunit protein uS12 (124 aa).

Asp-89 bears the 3-methylthioaspartic acid mark.

The protein belongs to the universal ribosomal protein uS12 family. In terms of assembly, part of the 30S ribosomal subunit. Contacts proteins S8 and S17. May interact with IF1 in the 30S initiation complex.

Its function is as follows. With S4 and S5 plays an important role in translational accuracy. In terms of biological role, interacts with and stabilizes bases of the 16S rRNA that are involved in tRNA selection in the A site and with the mRNA backbone. Located at the interface of the 30S and 50S subunits, it traverses the body of the 30S subunit contacting proteins on the other side and probably holding the rRNA structure together. The combined cluster of proteins S8, S12 and S17 appears to hold together the shoulder and platform of the 30S subunit. This chain is Small ribosomal subunit protein uS12, found in Erwinia amylovora (Fire blight bacteria).